The primary structure comprises 189 residues: UPF0301 protein CTA_0231 (189 aa).

This sequence belongs to the UPF0301 (AlgH) family.

This is UPF0301 protein CTA_0231 from Chlamydia trachomatis serovar A (strain ATCC VR-571B / DSM 19440 / HAR-13).